The chain runs to 354 residues: UDP-N-acetylglucosamine--N-acetylmuramyl-(pentapeptide) pyrophosphoryl-undecaprenol N-acetylglucosamine transferase (354 aa).

Residues 15–17 (TGG), Asn127, Arg163, Ser191, Ile244, 263–268 (ALTVSE), and Gln288 contribute to the UDP-N-acetyl-alpha-D-glucosamine site.

This sequence belongs to the glycosyltransferase 28 family. MurG subfamily.

The protein localises to the cell inner membrane. It catalyses the reaction di-trans,octa-cis-undecaprenyl diphospho-N-acetyl-alpha-D-muramoyl-L-alanyl-D-glutamyl-meso-2,6-diaminopimeloyl-D-alanyl-D-alanine + UDP-N-acetyl-alpha-D-glucosamine = di-trans,octa-cis-undecaprenyl diphospho-[N-acetyl-alpha-D-glucosaminyl-(1-&gt;4)]-N-acetyl-alpha-D-muramoyl-L-alanyl-D-glutamyl-meso-2,6-diaminopimeloyl-D-alanyl-D-alanine + UDP + H(+). The protein operates within cell wall biogenesis; peptidoglycan biosynthesis. Functionally, cell wall formation. Catalyzes the transfer of a GlcNAc subunit on undecaprenyl-pyrophosphoryl-MurNAc-pentapeptide (lipid intermediate I) to form undecaprenyl-pyrophosphoryl-MurNAc-(pentapeptide)GlcNAc (lipid intermediate II). The protein is UDP-N-acetylglucosamine--N-acetylmuramyl-(pentapeptide) pyrophosphoryl-undecaprenol N-acetylglucosamine transferase of Vibrio cholerae serotype O1 (strain ATCC 39315 / El Tor Inaba N16961).